A 279-amino-acid polypeptide reads, in one-letter code: Zinc finger AN1 and C2H2 domain-containing stress-associated protein 11 (279 aa).

2 AN1-type zinc fingers span residues 7-55 (PDLG…REDV) and 95-145 (ATKK…KLPF). Residues cysteine 13, cysteine 18, cysteine 28, cysteine 31, cysteine 36, histidine 39, histidine 45, cysteine 47, cysteine 101, cysteine 106, cysteine 118, cysteine 121, cysteine 126, histidine 129, histidine 135, and cysteine 137 each contribute to the Zn(2+) site. The disordered stretch occupies residues 152 to 178 (STTRKEAKTTRPNKAHPSTSSSSSSSR). Low complexity predominate over residues 169–178 (STSSSSSSSR). 2 C2H2-type zinc fingers span residues 213 to 236 (EVCP…EKTH) and 250 to 273 (DVCP…ERDH).

Functionally, may be involved in environmental stress response. The sequence is that of Zinc finger AN1 and C2H2 domain-containing stress-associated protein 11 (SAP11) from Arabidopsis thaliana (Mouse-ear cress).